The primary structure comprises 669 residues: MSESKQQYLEELKQQLHYHAVRYYVEDNPEIPDAEYDRMMRELMAIEAEHPEWISVDSPSQRVGGVALDSFRQVTHEIPMLSLDNAFSDEELESFLKRAQDRMPSAHIDAFCCEPKLDGLAVSLLYENGVLVQAATRGDGTTGENITENVRTIASVPLKLQGEGWPSRIEVRGEVFMPKAGFEKLNDIARKKGEKVFVNPRNAAAGSLRQLDSKITATRPLAFYAYSVGVVEGISLSSSHYQRFLQLKQWGLPMCPETKLVNGLESVKAFYADILNRRDALPYEIDGVVIKIDDIVIQEKLGFVARAPRWAIAYKFPAQEELTLLNDVEFQVGRTGAITPVAKLEPVFVGGVTVSNATLHNADEIERLGVMVGDTVVIRRAGDVIPQIVSVVKDRRKGDEKNIIFPTACPVCHSHVERIEGEAVTRCSGGLVCQAQRKEALKHFVSRKALDVDGLGDKVIEQLVDKEMVETPADLFTLSAGVLTVLERMGPKSAQNIVNALNVAKETTLARFLYSLGIREVGEATAANLARHFKTLEAIQTATHEQLIEVPDIGEVVARHITAFFAEEKNQRVVQALIEQGIVWPAVEELGSEIPQPLAGKVVVLTGTLTQLSRGDAKAALERLGAKVTGSVSKKTDIVFAGEAAGSKLTKAQELGVEIQTEQDLLALL.

NAD(+)-binding positions include 33-37 (DAEYD), 82-83 (SL), and glutamate 114. Catalysis depends on lysine 116, which acts as the N6-AMP-lysine intermediate. Residues arginine 137, glutamate 174, lysine 291, and lysine 315 each coordinate NAD(+). Zn(2+) contacts are provided by cysteine 409, cysteine 412, cysteine 427, and cysteine 433. The BRCT domain occupies 593–669 (EIPQPLAGKV…QTEQDLLALL (77 aa)).

The protein belongs to the NAD-dependent DNA ligase family. LigA subfamily. Requires Mg(2+) as cofactor. It depends on Mn(2+) as a cofactor.

The enzyme catalyses NAD(+) + (deoxyribonucleotide)n-3'-hydroxyl + 5'-phospho-(deoxyribonucleotide)m = (deoxyribonucleotide)n+m + AMP + beta-nicotinamide D-nucleotide.. Functionally, DNA ligase that catalyzes the formation of phosphodiester linkages between 5'-phosphoryl and 3'-hydroxyl groups in double-stranded DNA using NAD as a coenzyme and as the energy source for the reaction. It is essential for DNA replication and repair of damaged DNA. The chain is DNA ligase from Vibrio vulnificus (strain CMCP6).